A 312-amino-acid chain; its full sequence is Methionyl-tRNA formyltransferase (312 aa).

Positions 34-54 (PDAASGRRGKPQPSPVAREAA) are disordered. Residue 110–113 (SLLP) coordinates (6S)-5,6,7,8-tetrahydrofolate.

The protein belongs to the Fmt family.

The catalysed reaction is L-methionyl-tRNA(fMet) + (6R)-10-formyltetrahydrofolate = N-formyl-L-methionyl-tRNA(fMet) + (6S)-5,6,7,8-tetrahydrofolate + H(+). Attaches a formyl group to the free amino group of methionyl-tRNA(fMet). The formyl group appears to play a dual role in the initiator identity of N-formylmethionyl-tRNA by promoting its recognition by IF2 and preventing the misappropriation of this tRNA by the elongation apparatus. The protein is Methionyl-tRNA formyltransferase of Mycobacterium tuberculosis (strain ATCC 25177 / H37Ra).